Here is a 436-residue protein sequence, read N- to C-terminus: MRSFLKPLLTIAAMALGMTAVIPMPAWALVELNVNKGNVEPLPIAITDFQGGDALGAQISQIVTADLKRSGLFAPIDKSAFIEKISNPDAAPRFDDWKVINAQALVTGSVSKEADGRIRAQYRLWDTFAGQQMSGEQFFANDANQRRVAHIIADAIYERLTGEKGYFDTRVVFIDESGAKNARKKRLAIMDQDGANVRYLSDGRSIVLTPRFSPNRQEITYMSYESGQPRVYLLQIETGQRELVGNFPGMTFAPRFSPDGQKVIMSLLRDDGNSNIFAMDLRSRSTTRLTNSTAIDTSPSYSPDGSKVVFTSDRGGRAQIYVMGADGSGQTRISFGDGVYSTPVWSPRGDLIAFTKQTGGEFQIGVMKTDGSGERILSSGFQQEGPTWAPNGRVLMFFRDSNGGPKLVSVDLTGRNEQPIPTANFASDPAWSPLLE.

An N-terminal signal peptide occupies residues 1 to 28; that stretch reads MRSFLKPLLTIAAMALGMTAVIPMPAWA.

It belongs to the TolB family. In terms of assembly, the Tol-Pal system is composed of five core proteins: the inner membrane proteins TolA, TolQ and TolR, the periplasmic protein TolB and the outer membrane protein Pal. They form a network linking the inner and outer membranes and the peptidoglycan layer.

The protein resides in the periplasm. In terms of biological role, part of the Tol-Pal system, which plays a role in outer membrane invagination during cell division and is important for maintaining outer membrane integrity. This is Tol-Pal system protein TolB from Mesorhizobium japonicum (strain LMG 29417 / CECT 9101 / MAFF 303099) (Mesorhizobium loti (strain MAFF 303099)).